The sequence spans 252 residues: Aspartate/glutamate leucyltransferase (252 aa).

This sequence belongs to the R-transferase family. Bpt subfamily.

It localises to the cytoplasm. The catalysed reaction is N-terminal L-glutamyl-[protein] + L-leucyl-tRNA(Leu) = N-terminal L-leucyl-L-glutamyl-[protein] + tRNA(Leu) + H(+). It carries out the reaction N-terminal L-aspartyl-[protein] + L-leucyl-tRNA(Leu) = N-terminal L-leucyl-L-aspartyl-[protein] + tRNA(Leu) + H(+). Its function is as follows. Functions in the N-end rule pathway of protein degradation where it conjugates Leu from its aminoacyl-tRNA to the N-termini of proteins containing an N-terminal aspartate or glutamate. This Xanthomonas campestris pv. campestris (strain B100) protein is Aspartate/glutamate leucyltransferase.